Consider the following 263-residue polypeptide: Small ribosomal subunit protein uS2m (263 aa).

The transit peptide at 1–15 directs the protein to the mitochondrion; it reads MLSRKLSPEQLVARR.

It belongs to the universal ribosomal protein uS2 family. In terms of assembly, component of the mitochondrial small ribosomal subunit (mt-SSU). Mature yeast 74S mitochondrial ribosomes consist of a small (37S) and a large (54S) subunit. The 37S small subunit contains a 15S ribosomal RNA (15S mt-rRNA) and at least 32 different proteins. The 54S large subunit contains a 21S rRNA (21S mt-rRNA) and at least 45 different proteins.

It localises to the mitochondrion. Its function is as follows. Component of the mitochondrial ribosome (mitoribosome), a dedicated translation machinery responsible for the synthesis of mitochondrial genome-encoded proteins, including at least some of the essential transmembrane subunits of the mitochondrial respiratory chain. The mitoribosomes are attached to the mitochondrial inner membrane and translation products are cotranslationally integrated into the membrane. In Schizosaccharomyces pombe (strain 972 / ATCC 24843) (Fission yeast), this protein is Small ribosomal subunit protein uS2m.